We begin with the raw amino-acid sequence, 1070 residues long: Carbamoyl phosphate synthase large chain (1070 aa).

The carboxyphosphate synthetic domain stretch occupies residues 1–401 (MPKRDDIKTI…ALLKAVRSLE (401 aa)). Residues Arg-129, Arg-169, Gly-175, Gly-176, Lys-208, Ile-210, Glu-215, Gly-241, Ile-242, His-243, Gln-284, and Glu-298 each coordinate ATP. Residues 133 to 327 (RDLMNELGEP…IAKLAAKIAV (195 aa)) enclose the ATP-grasp 1 domain. Positions 284, 298, and 300 each coordinate Mg(2+). Mn(2+)-binding residues include Gln-284, Glu-298, and Asn-300. Positions 402–546 (IGADHLLLEE…YSTYEEENES (145 aa)) are oligomerization domain. The carbamoyl phosphate synthetic domain stretch occupies residues 547 to 929 (TRSAKESVIV…ALYKGFVASG (383 aa)). Residues 671-861 (EKALEILQIP…MANVATRVIL (191 aa)) form the ATP-grasp 2 domain. Arg-707, Arg-746, Val-748, Glu-752, Gly-777, Val-778, His-779, Ser-780, Gln-820, and Glu-832 together coordinate ATP. Residues Gln-820, Glu-832, and Asn-834 each coordinate Mg(2+). Positions 820, 832, and 834 each coordinate Mn(2+). The MGS-like domain occupies 930–1070 (TTMHDYGTVL…SEVKQPKARV (141 aa)). An allosteric domain region spans residues 930–1070 (TTMHDYGTVL…SEVKQPKARV (141 aa)).

This sequence belongs to the CarB family. In terms of assembly, composed of two chains; the small (or glutamine) chain promotes the hydrolysis of glutamine to ammonia, which is used by the large (or ammonia) chain to synthesize carbamoyl phosphate. Tetramer of heterodimers (alpha,beta)4. Mg(2+) serves as cofactor. Mn(2+) is required as a cofactor.

The catalysed reaction is hydrogencarbonate + L-glutamine + 2 ATP + H2O = carbamoyl phosphate + L-glutamate + 2 ADP + phosphate + 2 H(+). It carries out the reaction hydrogencarbonate + NH4(+) + 2 ATP = carbamoyl phosphate + 2 ADP + phosphate + 2 H(+). Its pathway is amino-acid biosynthesis; L-arginine biosynthesis; carbamoyl phosphate from bicarbonate: step 1/1. It functions in the pathway pyrimidine metabolism; UMP biosynthesis via de novo pathway; (S)-dihydroorotate from bicarbonate: step 1/3. Its function is as follows. Large subunit of the glutamine-dependent carbamoyl phosphate synthetase (CPSase). CPSase catalyzes the formation of carbamoyl phosphate from the ammonia moiety of glutamine, carbonate, and phosphate donated by ATP, constituting the first step of 2 biosynthetic pathways, one leading to arginine and/or urea and the other to pyrimidine nucleotides. The large subunit (synthetase) binds the substrates ammonia (free or transferred from glutamine from the small subunit), hydrogencarbonate and ATP and carries out an ATP-coupled ligase reaction, activating hydrogencarbonate by forming carboxy phosphate which reacts with ammonia to form carbamoyl phosphate. This is Carbamoyl phosphate synthase large chain from Listeria monocytogenes serotype 4a (strain HCC23).